Here is a 338-residue protein sequence, read N- to C-terminus: NADPH dehydrogenase (338 aa).

22–25 is an FMN binding site; it reads SPMC. Residue Y27 coordinates substrate. Positions 59 and 101 each coordinate FMN. 163–166 serves as a coordination point for substrate; sequence HAAH. Residues R214 and 306 to 307 contribute to the FMN site; that span reads GR.

It belongs to the NADH:flavin oxidoreductase/NADH oxidase family. NamA subfamily. In terms of assembly, homotetramer. FMN is required as a cofactor.

The catalysed reaction is A + NADPH + H(+) = AH2 + NADP(+). Functionally, catalyzes the reduction of the double bond of an array of alpha,beta-unsaturated aldehydes and ketones. It also reduces the nitro group of nitroester and nitroaromatic compounds. It could have a role in detoxification processes. The sequence is that of NADPH dehydrogenase from Listeria welshimeri serovar 6b (strain ATCC 35897 / DSM 20650 / CCUG 15529 / CIP 8149 / NCTC 11857 / SLCC 5334 / V8).